The following is a 198-amino-acid chain: Succinate dehydrogenase [ubiquinone] cytochrome b subunit, mitochondrial (198 aa).

A mitochondrion-targeting transit peptide spans 1-50; that stretch reads MSAMMVKLGLNKSALLLKPSAFSRAAALSSSRRLLFNTARTNFLSTSPLK. At 51–99 the chain is on the mitochondrial matrix side; it reads NVASEMNTKAAIAEEQILNKQRAKRPISPHLTIYQPQLTWYLSSLHRIS. Residues Ser-93 and Arg-97 each contribute to the a ubiquinone site. The helical transmembrane segment at 100–120 threads the bilayer; that stretch reads LVLMGLGFYLFTILFGVSGLL. Topologically, residues 121-139 are mitochondrial intermembrane; sequence GLGLTTEKVSNWYHQKFSK. A helical membrane pass occupies residues 140-160; the sequence is ITEWSIKGSFAYLFAIHYGGA. Residue His-156 participates in heme binding. Residues 161–175 lie on the Mitochondrial matrix side of the membrane; the sequence is IRHLIWDTAKELTLK. Residues 176 to 196 traverse the membrane as a helical segment; sequence GVYRTGYALIGFTAVLGTYLL. Over 197 to 198 the chain is Mitochondrial intermembrane; sequence TL.

The protein belongs to the cytochrome b560 family. Forms part of complex II containing four subunits: a flavoprotein (FP), an iron-sulfur protein (IP) and a cytochrome b composed of two integral membrane proteins. Heme is required as a cofactor.

The protein localises to the mitochondrion inner membrane. It participates in carbohydrate metabolism; tricarboxylic acid cycle. In terms of biological role, membrane-anchoring mono-heme cytochrome b subunit of succinate dehydrogenase (SDH) that is involved in system II of the mitochondrial electron transport chain and is responsible for transferring electrons from succinate to ubiquinone (coenzyme Q). SDH3 and SDH4 form the membrane dimer that anchors the catalytic dimer formed by SDH1 and SDH2 to the matrix surface of the mitochondrial inner membrane. Electrons originating from the catalytic dimer enter the membrane dimer for ubiquinone reduction. The polypeptide is Succinate dehydrogenase [ubiquinone] cytochrome b subunit, mitochondrial (SDH3) (Saccharomyces cerevisiae (strain ATCC 204508 / S288c) (Baker's yeast)).